The chain runs to 76 residues: Alpha/kappa-conotoxin-like fe14.1 (76 aa).

Positions 1–24 (MPSVRSVTCCCLLWMMLSVQLVTP) are cleaved as a signal peptide. Residues 25 to 39 (GSPGTAQLSGHRTAR) constitute a propeptide that is removed on maturation. Cystine bridges form between C46–C61 and C50–C63. R64 bears the Arginine amide mark. A propeptide spanning residues 65-76 (GKRDVVSSSMAV) is cleaved from the precursor.

Belongs to the conotoxin J superfamily. As to expression, expressed by the venom duct.

Its subcellular location is the secreted. In terms of biological role, highly inhibits both nicotinic acetylcholine receptors (neuronal (alpha-3/beta-4) and muscular (alpha-1/beta-1/epsilon/delta) subtypes) and the voltage-gated potassium channel Kv1.6/KCNA6 subtype. The chain is Alpha/kappa-conotoxin-like fe14.1 from Conus ferrugineus (Cone snail).